The following is a 350-amino-acid chain: Protein-glutamate methylesterase/protein-glutamine glutaminase (350 aa).

In terms of domain architecture, Response regulatory spans lysine 5–valine 122. At aspartate 56 the chain carries 4-aspartylphosphate. Positions proline 152–arginine 346 constitute a CheB-type methylesterase domain. Catalysis depends on residues serine 165, histidine 191, and aspartate 288.

This sequence belongs to the CheB family. In terms of processing, phosphorylated by CheA. Phosphorylation of the N-terminal regulatory domain activates the methylesterase activity.

The protein localises to the cytoplasm. The catalysed reaction is [protein]-L-glutamate 5-O-methyl ester + H2O = L-glutamyl-[protein] + methanol + H(+). It carries out the reaction L-glutaminyl-[protein] + H2O = L-glutamyl-[protein] + NH4(+). Involved in chemotaxis. Part of a chemotaxis signal transduction system that modulates chemotaxis in response to various stimuli. Catalyzes the demethylation of specific methylglutamate residues introduced into the chemoreceptors (methyl-accepting chemotaxis proteins or MCP) by CheR. Also mediates the irreversible deamidation of specific glutamine residues to glutamic acid. The protein is Protein-glutamate methylesterase/protein-glutamine glutaminase of Bordetella bronchiseptica (strain ATCC BAA-588 / NCTC 13252 / RB50) (Alcaligenes bronchisepticus).